Reading from the N-terminus, the 987-residue chain is SNF2 domain-containing protein ENL1 (987 aa).

Disordered regions lie at residues 1-172 (MASP…AYGG) and 224-245 (FGDY…ENHA). Composition is skewed to pro residues over residues 18-27 (TPPAPTPLAA) and 51-71 (NPNP…PQEP). A compositionally biased stretch (basic and acidic residues) spans 99–110 (DSIRDILDDLTT). A compositionally biased stretch (polar residues) spans 141 to 156 (PSQSQLNDGTKPSSSF). Residues 226–237 (DYDDEDDIDQDA) show a composition bias toward acidic residues. One can recognise a Helicase ATP-binding domain in the interval 292-466 (WVLHCRGTGG…WALFYFCCPE (175 aa)). An ATP-binding site is contributed by 305-312 (DDMGLGKT). The short motif at 417 to 420 (DEGH) is the DEAH box element. A Helicase C-terminal domain is found at 645–801 (SLLQNLVSEG…TRYFSKRDIQ (157 aa)).

The protein belongs to the SNF2/RAD54 helicase family. As to expression, expressed in ovaries, roots, shoots and leaves.

It localises to the cytoplasm. The protein resides in the chromosome. Its function is as follows. DNA helicase that acts as an essential component of the spindle assembly checkpoint. Plays an indispensable role in the development of seed endosperm. Is required to secure sister chromosome separation during endosperm syncytial mitosis, which involves extremely rapid free nuclear cycles. The sequence is that of SNF2 domain-containing protein ENL1 from Oryza sativa subsp. japonica (Rice).